A 361-amino-acid chain; its full sequence is 3,6-anhydro-alpha-L-galactonate cycloisomerase (361 aa).

Lys166 functions as the Proton acceptor in the catalytic mechanism. Positions 195, 221, and 247 each coordinate Mg(2+). Catalysis depends on His297, which acts as the Proton donor/acceptor.

The protein belongs to the mandelate racemase/muconate lactonizing enzyme family. It depends on Mg(2+) as a cofactor.

It catalyses the reaction 3,6-anhydro-L-galactonate = 2-dehydro-3-deoxy-L-galactonate. Its function is as follows. Involved in the degradation of 3,6-anhydro-L-galactose, which is the major monomeric sugar of red macroalgae. Catalyzes the isomerization of 3,6-anhydrogalactonate (AHGA) to 2-keto-3-deoxy-galactonate (KDGal). The sequence is that of 3,6-anhydro-alpha-L-galactonate cycloisomerase from Streptomyces coelicolor (strain ATCC BAA-471 / A3(2) / M145).